Reading from the N-terminus, the 194-residue chain is Probable WRKY transcription factor 51 (194 aa).

The disordered stretch occupies residues 58-97; it reads SSETFTGESGGSGSATTLSKKESTNRGSKESDQTKETGHR. Basic and acidic residues predominate over residues 76-96; sequence SKKESTNRGSKESDQTKETGH. The segment at residues 104–169 is a DNA-binding region (WRKY); it reads SKIDVMDDGF…YEGVHNHESL (66 aa).

It belongs to the WRKY group II-c family. Interacts with CAMBP25/VQ15.

It localises to the nucleus. Functionally, transcription factor. Interacts specifically with the W box (5'-(T)TGAC[CT]-3'), a frequently occurring elicitor-responsive cis-acting element. Involved in defense responses. May act as positive regulator of salicylic acid (SA)-mediated signaling and negative regulator of jasmonic acid (JA)-mediated signaling. In Arabidopsis thaliana (Mouse-ear cress), this protein is Probable WRKY transcription factor 51 (WRKY51).